We begin with the raw amino-acid sequence, 326 residues long: Acetyl-coenzyme A carboxylase carboxyl transferase subunit alpha (326 aa).

The CoA carboxyltransferase C-terminal domain maps to 44–298 (KLETRAMQLR…KQALLDNLDE (255 aa)).

The protein belongs to the AccA family. As to quaternary structure, acetyl-CoA carboxylase is a heterohexamer composed of biotin carboxyl carrier protein (AccB), biotin carboxylase (AccC) and two subunits each of ACCase subunit alpha (AccA) and ACCase subunit beta (AccD).

It is found in the cytoplasm. It catalyses the reaction N(6)-carboxybiotinyl-L-lysyl-[protein] + acetyl-CoA = N(6)-biotinyl-L-lysyl-[protein] + malonyl-CoA. It functions in the pathway lipid metabolism; malonyl-CoA biosynthesis; malonyl-CoA from acetyl-CoA: step 1/1. In terms of biological role, component of the acetyl coenzyme A carboxylase (ACC) complex. First, biotin carboxylase catalyzes the carboxylation of biotin on its carrier protein (BCCP) and then the CO(2) group is transferred by the carboxyltransferase to acetyl-CoA to form malonyl-CoA. The protein is Acetyl-coenzyme A carboxylase carboxyl transferase subunit alpha of Trichormus variabilis (strain ATCC 29413 / PCC 7937) (Anabaena variabilis).